The following is a 1637-amino-acid chain: Acrosomal protein KIAA1210 (1637 aa).

Disordered stretches follow at residues 44 to 121, 141 to 293, 341 to 404, 438 to 759, 865 to 896, 935 to 975, 1017 to 1057, 1090 to 1137, 1182 to 1238, and 1539 to 1558; these read RFSS…LSIS, RTTT…KNEW, PTTT…KKKD, VCGE…SQSE, PKLP…EGST, SKYS…FQPL, LQPW…IPSQ, FPFQ…SRRA, SQTI…SKSF, and NKGD…PAFS. A compositionally biased stretch (basic residues) spans 103–114; the sequence is HRSKSLKIKSQR. The segment covering 141–156 has biased composition (low complexity); the sequence is RTTTTFRRRSSQCSST. Residues 170–190 are compositionally biased toward polar residues; it reads SESSTQQFSGFSTPATSQGCL. The span at 229–249 shows a compositional bias: basic and acidic residues; sequence AKEKTTTKTKEAEQGEQKVDS. Residues 250–261 show a composition bias toward low complexity; the sequence is TELSSQEQSSKT. Positions 341–353 are enriched in polar residues; that stretch reads PTTTEAEVTTVQK. The segment covering 355-374 has biased composition (basic and acidic residues); the sequence is PSDKGDVERELADIDVEAQK. The span at 508–526 shows a compositional bias: low complexity; sequence TGETSSDSKSTSEYESSSE. A compositionally biased stretch (acidic residues) spans 550–572; it reads ADDEEDGDDEKEEKDNDDDDEEN. Residues 689–698 are compositionally biased toward low complexity; the sequence is DLSSSEQEQQ. Polar residues-rich tracts occupy residues 745-759, 879-896, 935-956, 964-975, and 1017-1030; these read SPTQ…SQSE, GKQS…EGST, SKYS…STSA, SQPSVTPKFQPL, and LQPW…QVSV.

As to quaternary structure, interacts with TOP2B. As to expression, predominantly expressed in testis (at protein level).

It is found in the cytoplasmic vesicle. The protein localises to the secretory vesicle. It localises to the acrosome. The polypeptide is Acrosomal protein KIAA1210 (Mus musculus (Mouse)).